Here is a 677-residue protein sequence, read N- to C-terminus: O-fucosyltransferase 27 (677 aa).

Residues 15 to 35 (WIGLLGLVLSAFSLLVHFLLA) form a helical; Signal-anchor for type II membrane protein membrane-spanning segment. Residue Asn130 is glycosylated (N-linked (GlcNAc...) asparagine). A disordered region spans residues 410 to 437 (PPSIEVETKHDSLKSTRQRPQPLPPPPA). N-linked (GlcNAc...) asparagine glycosylation is found at Asn542 and Asn592. Residues 619–677 (NAEKEEDLDEEDLSSSGLFFGHKESGGNNNGNNETVNSEANNKEEGQLEDQEELEGSER) form a disordered region. A compositionally biased stretch (acidic residues) spans 622–631 (KEEDLDEEDL). Residues 644 to 658 (GGNNNGNNETVNSEA) are compositionally biased toward low complexity. Asn651 carries an N-linked (GlcNAc...) asparagine glycan. Residues 665–677 (QLEDQEELEGSER) show a composition bias toward acidic residues.

Belongs to the glycosyltransferase GT106 family.

The protein localises to the membrane. The protein operates within glycan metabolism. The polypeptide is O-fucosyltransferase 27 (Arabidopsis thaliana (Mouse-ear cress)).